The sequence spans 180 residues: DNA-directed RNA polymerase subunit omega (180 aa).

Residues 100–180 are disordered; it reads ISKSGTPILP…NSDDSETTNS (81 aa). 2 stretches are compositionally biased toward acidic residues: residues 137-151 and 159-180; these read EVDVDAELEVGDEET and AEAETEAETTEVNSDDSETTNS.

The protein belongs to the RNA polymerase subunit omega family. As to quaternary structure, the RNAP catalytic core consists of 2 alpha, 1 beta, 1 beta' and 1 omega subunit. When a sigma factor is associated with the core the holoenzyme is formed, which can initiate transcription.

The enzyme catalyses RNA(n) + a ribonucleoside 5'-triphosphate = RNA(n+1) + diphosphate. Promotes RNA polymerase assembly. Latches the N- and C-terminal regions of the beta' subunit thereby facilitating its interaction with the beta and alpha subunits. The polypeptide is DNA-directed RNA polymerase subunit omega (Pelagibacter ubique (strain HTCC1062)).